We begin with the raw amino-acid sequence, 230 residues long: UPF0494 membrane protein C1348.07 (230 aa).

The next 3 membrane-spanning stretches (helical) occupy residues 78–98 (WPLLIIWCILIVFAIDKNFEV), 120–140 (IWGPIAIYICLFILLLLGLIY), and 148–168 (AIPLISIVIAAVVVIIAVAMV).

The protein belongs to the UPF0494 family.

The protein resides in the vacuole. Its subcellular location is the membrane. The polypeptide is UPF0494 membrane protein C1348.07 (Schizosaccharomyces pombe (strain 972 / ATCC 24843) (Fission yeast)).